A 365-amino-acid polypeptide reads, in one-letter code: Mannitol dehydrogenase (365 aa).

Zn(2+)-binding residues include Cys-50, His-72, Cys-103, Cys-106, Cys-109, Cys-117, and Cys-166.

Belongs to the zinc-containing alcohol dehydrogenase family. The cofactor is Zn(2+).

It is found in the cytoplasm. It carries out the reaction D-mannitol + NAD(+) = D-mannose + NADH + H(+). Its function is as follows. Oxidizes mannitol to mannose. Provides the initial step by which translocated mannitol is committed to central metabolism and, by regulating mannitol pool size, is important in regulating salt tolerance at the cellular level. The chain is Mannitol dehydrogenase (MTD) from Apium graveolens (Celery).